We begin with the raw amino-acid sequence, 526 residues long: GMP synthase [glutamine-hydrolyzing] (526 aa).

The 201-residue stretch at 4–204 (KIVVLDFGSQ…AHAICGCSGD (201 aa)) folds into the Glutamine amidotransferase type-1 domain. Residue Cys-87 is the Nucleophile of the active site. Residues His-178 and Glu-180 contribute to the active site. The region spanning 205–401 (WTPASFVEEQ…LDVPDPIVGR (197 aa)) is the GMPS ATP-PPase domain. ATP is bound at residue 232–238 (SGGVDSS).

In terms of assembly, homodimer.

The enzyme catalyses XMP + L-glutamine + ATP + H2O = GMP + L-glutamate + AMP + diphosphate + 2 H(+). It participates in purine metabolism; GMP biosynthesis; GMP from XMP (L-Gln route): step 1/1. Catalyzes the synthesis of GMP from XMP. This is GMP synthase [glutamine-hydrolyzing] from Salinibacter ruber (strain DSM 13855 / M31).